A 358-amino-acid polypeptide reads, in one-letter code: Gibberellin 3-beta-dioxygenase 1 (358 aa).

In terms of domain architecture, Fe2OG dioxygenase spans 204 to 308; sequence DLNWAQAALQ…RLSVAFLWGP (105 aa). Residues H232, D234, and H289 each contribute to the Fe cation site. Residue R299 is part of the active site.

Belongs to the iron/ascorbate-dependent oxidoreductase family. GA3OX subfamily. Requires L-ascorbate as cofactor. The cofactor is Fe cation. Expressed in stems, roots, leaves, flowers, and siliques. Highly expressed near the nodes in stems and in the stamen filaments of flowers. Detected in developing cotyledons, vegetative shoot apical meristem and non-meristematic, non-elongation regions of the roots. Found in the cortex and the endodermis of the embryo axis in germinating seeds and in the placenta in developing siliques.

It carries out the reaction gibberellin A9 + 2-oxoglutarate + O2 = gibberellin A4 + succinate + CO2. The enzyme catalyses gibberellin A20 + 2-oxoglutarate + O2 = gibberellin A1 + succinate + CO2. Its pathway is plant hormone biosynthesis; gibberellin biosynthesis. In terms of biological role, converts the inactive gibberellin (GA) precursors GA9 and GA20 into the bioactives gibberellins GA4 and GA1, respectively. Involved in the production of bioactive GA for vegetative growth and development. The chain is Gibberellin 3-beta-dioxygenase 1 (GA3OX1) from Arabidopsis thaliana (Mouse-ear cress).